The chain runs to 1367 residues: MAP3K epsilon protein kinase 2 (1367 aa).

One can recognise a Protein kinase domain in the interval 20 to 274; that stretch reads YMLGDEIGKG…AKTLLSHPWI (255 aa). HEAT repeat units follow at residues 25–62 and 86–125; these read EIGKGAYGRVYIGLDLENGDFVAIKQVSLENIGQEDLN and LKTKTHLHIILEYVENGSLANIIKPNKFGPFPESLVTVYI. ATP is bound by residues 26-34 and K49; that span reads IGKGAYGRV. D144 serves as the catalytic Proton acceptor. An HEAT 3 repeat occupies 218 to 256; the sequence is PYYDLQPMPALYRIVQDDTPPIPDSLSPDITDFLRLCFK. Disordered regions lie at residues 285–422 and 437–513; these read LRHS…GRRN and SSHS…VADG. Residues 293-306 are compositionally biased toward basic and acidic residues; the sequence is YMKETDSSSEKDAE. Positions 351-363 are enriched in acidic residues; sequence LGEEGTDSEDDIN. A compositionally biased stretch (polar residues) spans 378 to 396; that stretch reads RQSGTCSISSDAKGTSQDV. Basic and acidic residues-rich tracts occupy residues 397–408 and 475–491; these read LENHEKYDRDEI and SLHDLFHPLDKVPEGKT. Residues 492 to 507 show a composition bias toward polar residues; that stretch reads NEASTSTPTANVNQGD. HEAT repeat units lie at residues 538–576, 577–614, 633–658, 659–700, and 704–742; these read SQDGGDLFRLMMGVLKDDVLNIDDLVFDEKVPPENLFPL, QAVEFSRLVSSLRPDESEDAIVTSSLKLVAMFRQRPGQ, IPKSRVICAVLQLINEIVKDNTDFLE, NACL…SSPL, and MFISCRGIPVLVGFLEADYAKHREMVHLAIDGMWQVFKL. Positions 792 to 860 are disordered; the sequence is PRARSGQLDP…LHPDGDRPRL (69 aa). Composition is skewed to polar residues over residues 799 to 814 and 835 to 845; these read LDPNNPIFSQRETSPS and ALTSNSQSSDV. The segment covering 846–859 has biased composition (basic and acidic residues); that stretch reads HQPDALHPDGDRPR. 10 HEAT repeats span residues 850–888, 906–943, 1045–1066, 1067–1105, 1112–1150, 1154–1191, 1196–1236, 1257–1280, 1281–1317, and 1347–1367; these read ALHPDGDRPRLSSVVADATEDVIQQHRISLSANRTSTDK, DQVRPLLSLLEKEPPSRKISGQLDYVKHIAGIERHESR, DYLEKVADLLLEFARAETTVKS, YMCSQSLLSRLFQMFNRVEPPILLKILECTNHLSTDPNC, ADAIKQLIPNLELKEGPLVYQIHHEVLSALFNLCKINKR, QAAENGIIPHLMLFVMSDSPLKQYALPLLCDMAHASRN, LRAH…KVEQ, RHFVHILEPFLKIITKSSSINKTL, ALNGLTPLLIARLDHQDAIARLNLLKLIKAVYEKHPK, and QVLVKQMATSLLKALHINTIL.

It belongs to the protein kinase superfamily. Ser/Thr protein kinase family. In terms of processing, autophosphorylated. Expressed in both the sporophytic and the gametophytic tissues, especially in dividing cells. Mostly present in flower buds and mature flowers. Also accumulates in embryos and in roots.

Its subcellular location is the cytoplasm. The protein localises to the cytoskeleton. It localises to the microtubule organizing center. It is found in the nucleus. The protein resides in the nucleolus. Its subcellular location is the cell membrane. It carries out the reaction L-seryl-[protein] + ATP = O-phospho-L-seryl-[protein] + ADP + H(+). It catalyses the reaction L-threonyl-[protein] + ATP = O-phospho-L-threonyl-[protein] + ADP + H(+). In terms of biological role, serine/threonine-protein kinase involved in the spatial and temporal control system organizing cortical activities in mitotic and postmitotic cells. Required for the normal functioning of the plasma membrane in developing pollen. Involved in the regulation of cell expansion and embryo development. In Arabidopsis thaliana (Mouse-ear cress), this protein is MAP3K epsilon protein kinase 2.